A 435-amino-acid polypeptide reads, in one-letter code: MVDHSAALFNKAQNYMPGGVNSPVRAFGAVGGVPRFIKKASGPYLIDVDEKKYIDYVGSWGPMILGHAHPAVIQAAQEAVQNGLSFGAPCENEIKLAALIGEFMPSIEKVRMVNSGTEATMSALRLARGVTGRSKIIKFEGCYHGHADCLLVNAGSGALTFGMPSSPGVPLGTVQDTLTATFNDLDSVAALFEKYSKDIAAIIVEPIAGNMNLIPAAPDFLTGLRELCNQYGSLLIFDEVITGFRVAKGGAQSLYNIRPDLTALGKIIGGGMPVGAYGGRREIMNQLSPEGPVYQAGTLSGNPVAMAAGLATLKELTAENFYSNLKEKTERLVMGILSRAKAAKIPLTANFSCGIFGLIFTSEERVTRYAQAVNGNVEHFRSFFHKMLDNGVYLAPSAFESGFISAAHTNKEVDNTLDIIENIFSVSETYLRISV.

Residue Lys266 is modified to N6-(pyridoxal phosphate)lysine.

The protein belongs to the class-III pyridoxal-phosphate-dependent aminotransferase family. HemL subfamily. In terms of assembly, homodimer. Pyridoxal 5'-phosphate is required as a cofactor.

It is found in the cytoplasm. The enzyme catalyses (S)-4-amino-5-oxopentanoate = 5-aminolevulinate. Its pathway is porphyrin-containing compound metabolism; protoporphyrin-IX biosynthesis; 5-aminolevulinate from L-glutamyl-tRNA(Glu): step 2/2. The chain is Glutamate-1-semialdehyde 2,1-aminomutase from Coxiella burnetii (strain RSA 331 / Henzerling II).